The chain runs to 290 residues: Acetylglutamate kinase (290 aa).

Residues Gly65–Gly66, Arg87, and Asn186 contribute to the substrate site.

Belongs to the acetylglutamate kinase family. ArgB subfamily.

The protein localises to the cytoplasm. The enzyme catalyses N-acetyl-L-glutamate + ATP = N-acetyl-L-glutamyl 5-phosphate + ADP. It participates in amino-acid biosynthesis; L-arginine biosynthesis; N(2)-acetyl-L-ornithine from L-glutamate: step 2/4. In terms of biological role, catalyzes the ATP-dependent phosphorylation of N-acetyl-L-glutamate. This chain is Acetylglutamate kinase, found in Mycobacterium sp. (strain JLS).